Reading from the N-terminus, the 244-residue chain is MFLLNSLSRITRGNRSKRHQNLSDASSSSGSFSKKSSTSQLVRTGSPSVEPTALYLQQPFVRTHLVKGNFSTIVSLPRFVDLDEWVALNVYELFTYLNHFYDVFATFCTVKTCPVMSAAANFDYTWLDNNRKPVHLPAPQYIEYVLAWIENRLHDQNVFPTKAGLPFPSNFLVIVKAIYKQMFRIFAHMYYAHYAEILHLSLEAHWNSFFAHFIAFGKEFQLLDKRDTAPLKDLIVVLENQGNI.

A disordered region spans residues 14 to 45; that stretch reads NRSKRHQNLSDASSSSGSFSKKSSTSQLVRTG. The segment covering 23–39 has biased composition (low complexity); it reads SDASSSSGSFSKKSSTS. A phosphoserine mark is found at S46 and S48.

It belongs to the MOB1/phocein family. As to quaternary structure, interacts with orb6.

It is found in the cytoplasm. The protein resides in the cell cortex. Required for coordinating polarized cell growth during interphase with the onset of mitosis. In Schizosaccharomyces pombe (strain 972 / ATCC 24843) (Fission yeast), this protein is Maintenance of ploidy protein mob2 (mob2).